Consider the following 491-residue polypeptide: UDP-N-acetylmuramoyl-L-alanyl-D-glutamate--2,6-diaminopimelate ligase (491 aa).

Ser30 is a binding site for UDP-N-acetyl-alpha-D-muramoyl-L-alanyl-D-glutamate. 108 to 114 (GTNGKTT) contacts ATP. UDP-N-acetyl-alpha-D-muramoyl-L-alanyl-D-glutamate is bound by residues Asn149, 150-151 (TT), Ser177, Gln183, and Arg185. At Lys217 the chain carries N6-carboxylysine. Residues Arg383, 407 to 410 (DNPR), Gly458, and Glu462 each bind meso-2,6-diaminopimelate. The short motif at 407 to 410 (DNPR) is the Meso-diaminopimelate recognition motif element.

It belongs to the MurCDEF family. MurE subfamily. Mg(2+) is required as a cofactor. In terms of processing, carboxylation is probably crucial for Mg(2+) binding and, consequently, for the gamma-phosphate positioning of ATP.

It localises to the cytoplasm. It carries out the reaction UDP-N-acetyl-alpha-D-muramoyl-L-alanyl-D-glutamate + meso-2,6-diaminopimelate + ATP = UDP-N-acetyl-alpha-D-muramoyl-L-alanyl-gamma-D-glutamyl-meso-2,6-diaminopimelate + ADP + phosphate + H(+). It participates in cell wall biogenesis; peptidoglycan biosynthesis. Its function is as follows. Catalyzes the addition of meso-diaminopimelic acid to the nucleotide precursor UDP-N-acetylmuramoyl-L-alanyl-D-glutamate (UMAG) in the biosynthesis of bacterial cell-wall peptidoglycan. This is UDP-N-acetylmuramoyl-L-alanyl-D-glutamate--2,6-diaminopimelate ligase from Listeria monocytogenes serovar 1/2a (strain ATCC BAA-679 / EGD-e).